We begin with the raw amino-acid sequence, 281 residues long: Transcription factor lfc1 (281 aa).

The segment at residues 60 to 87 (CLTCRMKKIKCDETKPTCARCTHGQREC) is a DNA-binding region (zn(2)-C6 fungal-type).

Its subcellular location is the nucleus. Functionally, transcription factor that acts as a negative regulator of basidioma development via repressing the expression of genes involved in basidioma development, including hydrophobins such as Hyd-1 and Hyd-8, lectins such as JRL1, as well as the fruiting body differentiation gene FVFD16. This Flammulina velutipes (Agaricus velutipes) protein is Transcription factor lfc1.